We begin with the raw amino-acid sequence, 339 residues long: Dihydroorotate dehydrogenase (quinone) (339 aa).

FMN contacts are provided by residues 64-68 (AGADK) and T88. K68 contributes to the substrate binding site. A substrate-binding site is contributed by 113–117 (NRNGF). FMN contacts are provided by N141 and N174. Residue N174 coordinates substrate. S177 acts as the Nucleophile in catalysis. Substrate is bound at residue N179. FMN is bound by residues K219 and T247. Substrate is bound at residue 248–249 (NT). Residues G270, G299, and 320-321 (YS) contribute to the FMN site.

The protein belongs to the dihydroorotate dehydrogenase family. Type 2 subfamily. In terms of assembly, monomer. The cofactor is FMN.

It is found in the cell membrane. The enzyme catalyses (S)-dihydroorotate + a quinone = orotate + a quinol. It functions in the pathway pyrimidine metabolism; UMP biosynthesis via de novo pathway; orotate from (S)-dihydroorotate (quinone route): step 1/1. Catalyzes the conversion of dihydroorotate to orotate with quinone as electron acceptor. The polypeptide is Dihydroorotate dehydrogenase (quinone) (Haemophilus influenzae (strain PittEE)).